The following is a 98-amino-acid chain: NADH-ubiquinone oxidoreductase chain 4L (98 aa).

3 helical membrane-spanning segments follow: residues 1 to 21 (MPSI…GVLI), 26 to 46 (LMSS…LVSL), and 61 to 81 (IILL…LVMV).

Belongs to the complex I subunit 4L family. As to quaternary structure, core subunit of respiratory chain NADH dehydrogenase (Complex I) which is composed of 45 different subunits.

It is found in the mitochondrion inner membrane. It catalyses the reaction a ubiquinone + NADH + 5 H(+)(in) = a ubiquinol + NAD(+) + 4 H(+)(out). In terms of biological role, core subunit of the mitochondrial membrane respiratory chain NADH dehydrogenase (Complex I) which catalyzes electron transfer from NADH through the respiratory chain, using ubiquinone as an electron acceptor. Part of the enzyme membrane arm which is embedded in the lipid bilayer and involved in proton translocation. The sequence is that of NADH-ubiquinone oxidoreductase chain 4L (MT-ND4L) from Galago senegalensis (Northern lesser bushbaby).